An 804-amino-acid polypeptide reads, in one-letter code: Cyclic di-GMP-binding protein (804 aa).

Positions 1–18 are cleaved as a signal peptide; the sequence is MKMVSLIALLVFATGAQA. Over 19-766 the chain is Periplasmic; that stretch reads APIASKAPAH…DWYMHNHPFR (748 aa). Residues 24–69 form a disordered region; that stretch reads KAPAHQPTGSDLPPLPAAAPVAPAAQPSAQAVDPASAAPASDAGSA. The chain crosses the membrane as a helical span at residues 767–787; that stretch reads VIVVGLVGCLLVVAVLVRALF. Over 788–804 the chain is Cytoplasmic; sequence RHAMFRRRQLQEERQKS.

It belongs to the AcsB/BcsB family. Tightly associated with the cellulose synthase catalytic subunit.

It localises to the cell inner membrane. It functions in the pathway glycan metabolism; bacterial cellulose biosynthesis. Binds the cellulose synthase activator, bis-(3'-5') cyclic diguanylic acid (c-di-GMP). The protein is Cyclic di-GMP-binding protein (bcsBI) of Komagataeibacter xylinus (Gluconacetobacter xylinus).